The primary structure comprises 153 residues: MEKTLVILKPCTVQRGLIGEIVTRFEKKGLRLAGMKMVWLTDEILSEHYAHLKEKPFFQRIKDAMSVCPVIVCCWEGVDAIHVVRTLAGTTNGRNAAPGTIRGDYSMSVQENIVHASDSPETAEIELKRFFKDDEIFDYELKNLLSLYANDEF.

ATP contacts are provided by Lys-9, Phe-57, Arg-85, Thr-91, Arg-102, and Asn-112. Residue His-115 is the Pros-phosphohistidine intermediate of the active site.

It belongs to the NDK family. Homotetramer. Requires Mg(2+) as cofactor.

It localises to the cytoplasm. The catalysed reaction is a 2'-deoxyribonucleoside 5'-diphosphate + ATP = a 2'-deoxyribonucleoside 5'-triphosphate + ADP. It catalyses the reaction a ribonucleoside 5'-diphosphate + ATP = a ribonucleoside 5'-triphosphate + ADP. Functionally, major role in the synthesis of nucleoside triphosphates other than ATP. The ATP gamma phosphate is transferred to the NDP beta phosphate via a ping-pong mechanism, using a phosphorylated active-site intermediate. The chain is Nucleoside diphosphate kinase from Parabacteroides distasonis (strain ATCC 8503 / DSM 20701 / CIP 104284 / JCM 5825 / NCTC 11152).